Here is a 227-residue protein sequence, read N- to C-terminus: RNA-free ribonuclease P (227 aa).

This sequence belongs to the HARP family.

The enzyme catalyses Endonucleolytic cleavage of RNA, removing 5'-extranucleotides from tRNA precursor.. Its function is as follows. RNA-free RNase P that catalyzes the removal of the 5'-leader sequence from pre-tRNA to produce the mature 5'-terminus. The chain is RNA-free ribonuclease P from Archaeoglobus fulgidus (strain ATCC 49558 / DSM 4304 / JCM 9628 / NBRC 100126 / VC-16).